A 1247-amino-acid chain; its full sequence is MLASSSRIRAAWTRALLLPLLLAGPVGCLSRQELFPFGPGQGDLELEDGDDFVSPALELSGALRFYDRSDIDAVYVTTNGIIATSEPPAKESHPGLFPPTFGAVAPFLADLDTTDGLGKVYYREDLSPSITQRAAECVHRGFPEISFQPSSAVVVTWESVAPYQGPSRDPDQKGKRNTFQAVLASSDSSSYAIFLYPEDGLQFHTTFSKKENNQVPAVVAFSQGSVGFLWKSNGAYNIFANDRESVENLAKSSNSGQQGVWVFEIGSPATTNGVVPADVILGTEDGAEYDDEDEDYDLATTRLGLEDVGTTPFSYKALRRGGADTYSVPSVLSPRRAATERPLGPPTERTRSFQLAVETFHQQHPQVIDVDEVEETGVVFSYNTDSRQTCANNRHQCSVHAECRDYATGFCCSCVAGYTGNGRQCVAEGSPQRVNGKVKGRIFVGSSQVPIVFENTDLHSYVVMNHGRSYTAISTIPETVGYSLLPLAPVGGIIGWMFAVEQDGFKNGFSITGGEFTRQAEVTFVGHPGNLVIKQRFSGIDEHGHLTIDTELEGRVPQIPFGSSVHIEPYTELYHYSTSVITSSSTREYTVTEPERDGASPSRIYTYQWRQTITFQECVHDDSRPALPSTQQLSVDSVFVLYNQEEKILRYALSNSIGPVREGSPDALQNPCYIGTHGCDTNAACRPGPRTQFTCECSIGFRGDGRTCYDIDECSEQPSVCGSHTICNNHPGTFRCECVEGYQFSDEGTCVAVVDQRPINYCETGLHNCDIPQRAQCIYTGGSSYTCSCLPGFSGDGQACQDVDECQPSRCHPDAFCYNTPGSFTCQCKPGYQGDGFRCVPGEVEKTRCQHEREHILGAAGATDPQRPIPPGLFVPECDAHGHYAPTQCHGSTGYCWCVDRDGREVEGTRTRPGMTPPCLSTVAPPIHQGPAVPTAVIPLPPGTHLLFAQTGKIERLPLEGNTMRKTEAKAFLHVPAKVIIGLAFDCVDKMVYWTDITEPSIGRASLHGGEPTTIIRQDLGSPEGIAVDHLGRNIFWTDSNLDRIEVAKLDGTQRRVLFETDLVNPRGIVTDSVRGNLYWTDWNRDNPKIETSYMDGTNRRILVQDDLGLPNGLTFDAFSSQLCWVDAGTNRAECLNPSQPSRRKALEGLQYPFAVTSYGKNLYFTDWKMNSVVALDLAISKETDAFQPHKQTRLYGITTALSQCPQGHNYCSVNNGGCTHLCLATPGSRTCRCPDNTLGVDCIEQK.

A signal peptide spans 1 to 28 (MLASSSRIRAAWTRALLLPLLLAGPVGC). The NIDO domain occupies 106 to 268 (PFLADLDTTD…GVWVFEIGSP (163 aa)). Residues Tyr-289 and Tyr-296 each carry the sulfotyrosine modification. Positions 386–426 (SRQTCANNRHQCSVHAECRDYATGFCCSCVAGYTGNGRQCV) constitute an EGF-like 1 domain. Cystine bridges form between Cys-390/Cys-403, Cys-397/Cys-412, Cys-411/Cys-618, Cys-414/Cys-425, Cys-672/Cys-685, Cys-679/Cys-695, Cys-697/Cys-708, Cys-714/Cys-727, Cys-721/Cys-736, Cys-738/Cys-750, Cys-762/Cys-777, Cys-769/Cys-787, Cys-789/Cys-800, Cys-806/Cys-817, Cys-811/Cys-826, Cys-828/Cys-839, Cys-849/Cys-878, Cys-889/Cys-896, and Cys-898/Cys-919. The Nidogen G2 beta-barrel domain maps to 430 to 667 (SPQRVNGKVK…GPVREGSPDA (238 aa)). The region spanning 668–709 (LQNPCYIGTHGCDTNAACRPGPRTQFTCECSIGFRGDGRTCY) is the EGF-like 2 domain. Positions 702–704 (RGD) match the Cell attachment site motif. Positions 710–751 (DIDECSEQPSVCGSHTICNNHPGTFRCECVEGYQFSDEGTCV) constitute an EGF-like 3; calcium-binding domain. The region spanning 758–801 (PINYCETGLHNCDIPQRAQCIYTGGSSYTCSCLPGFSGDGQACQ) is the EGF-like 4 domain. The region spanning 802–840 (DVDECQPSRCHPDAFCYNTPGSFTCQCKPGYQGDGFRCV) is the EGF-like 5; calcium-binding domain. The 74-residue stretch at 846–919 (KTRCQHEREH…RTRPGMTPPC (74 aa)) folds into the Thyroglobulin type-1 domain. 2 O-linked (GalNAc...) threonine glycosylation sites follow: Thr-922 and Thr-935. 4 LDL-receptor class B repeats span residues 990 to 1032 (KMVY…DHLG), 1033 to 1075 (RNIF…DSVR), 1076 to 1120 (GNLY…DAFS), and 1121 to 1162 (SQLC…YGKN). Positions 1208 to 1244 (GHNYCSVNNGGCTHLCLATPGSRTCRCPDNTLGVDCI) constitute an EGF-like 6 domain. 3 disulfide bridges follow: Cys-1212–Cys-1223, Cys-1219–Cys-1232, and Cys-1234–Cys-1243.

In terms of assembly, interacts with FBLN1. Interacts with LGALS3BP. Interacts with PLXDC1. Interacts with SVEP1. In terms of processing, N- and O-glycosylated.

The protein resides in the secreted. It localises to the extracellular space. The protein localises to the extracellular matrix. Its subcellular location is the basement membrane. Its function is as follows. Sulfated glycoprotein widely distributed in basement membranes and tightly associated with laminin. Also binds to collagen IV and perlecan. It probably has a role in cell-extracellular matrix interactions. The chain is Nidogen-1 (NID1) from Homo sapiens (Human).